A 180-amino-acid chain; its full sequence is uncharacterized protein (180 aa).

This sequence to H.influenzae HI_0656.1.

This is an uncharacterized protein from Escherichia coli (strain K12).